A 642-amino-acid chain; its full sequence is uncharacterized protein (642 aa).

Glu-15 and Asp-118 together coordinate Mg(2+). One can recognise a PINc domain in the interval Val-29–Glu-149. A KH domain is found at Asp-510–Thr-578.

In the N-terminal section; belongs to the PINc/VapC protein family. Mg(2+) is required as a cofactor.

This is an uncharacterized protein from Methanocaldococcus jannaschii (strain ATCC 43067 / DSM 2661 / JAL-1 / JCM 10045 / NBRC 100440) (Methanococcus jannaschii).